The primary structure comprises 234 residues: Putative gustatory receptor clone PTE38 (234 aa).

Residues 1-11 form a helical membrane-spanning segment; sequence MYLFFSNLSFN. Residues 12–42 are Extracellular-facing; it reads DICIITTTIPKMLMNVQSHDQSITYLGCLSQ. Residues cysteine 39 and cysteine 121 are joined by a disulfide bond. A helical transmembrane segment spans residues 43–62; the sequence is VYLIVNFGSIESCLLAVMAY. At 63–84 the chain is on the cytoplasmic side; it reads DRYVAICHPLKYTVIMNHYFCV. A helical membrane pass occupies residues 85 to 105; that stretch reads MLLLFACSLALHMCLFHILMV. Residues 106-138 lie on the Extracellular side of the membrane; the sequence is LILTFCTKTEIPHFFCELAHIIKLTCSDNFINY. A helical transmembrane segment spans residues 139–160; that stretch reads LLIYTVSVLFFGVHIVGIILSY. Over 161–182 the chain is Cytoplasmic; sequence IYTVSSVLRMSLLGGMYKAFST. Residues 183-202 traverse the membrane as a helical segment; the sequence is CGSHLSVVSLFYGTGFGVHI. Residues 203 to 212 are Extracellular-facing; the sequence is SSPLTDSPRK. Residues 213 to 234 traverse the membrane as a helical segment; sequence TVVASVMYTVVTQMHGPFIYSL.

Belongs to the G-protein coupled receptor 1 family. Tongue specific.

The protein resides in the cell membrane. Its function is as follows. Possible taste receptor. This is Putative gustatory receptor clone PTE38 from Rattus norvegicus (Rat).